The sequence spans 294 residues: Nucleotide-binding protein Reut_A0350 (294 aa).

8 to 15 (GISGSGKS) contacts ATP. GTP is bound at residue 57–60 (DIRS).

This sequence belongs to the RapZ-like family.

Functionally, displays ATPase and GTPase activities. This chain is Nucleotide-binding protein Reut_A0350, found in Cupriavidus pinatubonensis (strain JMP 134 / LMG 1197) (Cupriavidus necator (strain JMP 134)).